We begin with the raw amino-acid sequence, 290 residues long: 4-hydroxybenzoate octaprenyltransferase (290 aa).

6 consecutive transmembrane segments (helical) span residues 38-58 (LAGM…GVFF), 99-119 (LFGA…SMTI), 141-161 (LPQL…FTAV), 213-233 (LIIG…GWQL), 238-258 (IYYL…KLIV), and 268-288 (AFLN…LSLL).

This sequence belongs to the UbiA prenyltransferase family. The cofactor is Mg(2+).

The protein localises to the cell inner membrane. The catalysed reaction is all-trans-octaprenyl diphosphate + 4-hydroxybenzoate = 4-hydroxy-3-(all-trans-octaprenyl)benzoate + diphosphate. It functions in the pathway cofactor biosynthesis; ubiquinone biosynthesis. In terms of biological role, catalyzes the prenylation of para-hydroxybenzoate (PHB) with an all-trans polyprenyl group. Mediates the second step in the final reaction sequence of ubiquinone-8 (UQ-8) biosynthesis, which is the condensation of the polyisoprenoid side chain with PHB, generating the first membrane-bound Q intermediate 3-octaprenyl-4-hydroxybenzoate. The sequence is that of 4-hydroxybenzoate octaprenyltransferase from Sodalis glossinidius (strain morsitans).